We begin with the raw amino-acid sequence, 512 residues long: Dihydroniloticin synthase CYP71CD2 (512 aa).

Residues 1–21 (MNLQLDYFSITSFLVFLVVLF) form a helical membrane-spanning segment. Residue C449 coordinates heme.

The protein belongs to the cytochrome P450 family. Requires heme as cofactor.

It is found in the membrane. The enzyme catalyses tirucalla-7,24-dien-3beta-ol + 2 reduced [NADPH--hemoprotein reductase] + 2 O2 = dihydroniloticin + 2 oxidized [NADPH--hemoprotein reductase] + 2 H2O + 2 H(+). It functions in the pathway secondary metabolite biosynthesis; terpenoid biosynthesis. In terms of biological role, monooxygenase involved in the biosynthesis of limonoids triterpene natural products such as azadirachtin, an antifeedant widely used as bioinsecticide, and possessing many medicinal applications including anti-tumoral, anti-malarial, anti-rheumatic, antibacterial, anti-inflammatory, anti-pyretic and diuretic effects. Catalyzes the conversion of tirucalladienol to dihydroniloticin. The protein is Dihydroniloticin synthase CYP71CD2 of Azadirachta indica (Neem tree).